The chain runs to 117 residues: Large ribosomal subunit protein bL19 (117 aa).

It belongs to the bacterial ribosomal protein bL19 family.

In terms of biological role, this protein is located at the 30S-50S ribosomal subunit interface and may play a role in the structure and function of the aminoacyl-tRNA binding site. In Vibrio cholerae serotype O1 (strain ATCC 39541 / Classical Ogawa 395 / O395), this protein is Large ribosomal subunit protein bL19.